A 129-amino-acid chain; its full sequence is Small ribosomal subunit protein uS11 (129 aa).

This sequence belongs to the universal ribosomal protein uS11 family. Part of the 30S ribosomal subunit. Interacts with proteins S7 and S18. Binds to IF-3.

Located on the platform of the 30S subunit, it bridges several disparate RNA helices of the 16S rRNA. Forms part of the Shine-Dalgarno cleft in the 70S ribosome. The sequence is that of Small ribosomal subunit protein uS11 from Bartonella tribocorum (strain CIP 105476 / IBS 506).